Reading from the N-terminus, the 494-residue chain is Membrane-bound lytic murein transglycosylase F (494 aa).

The N-terminal stretch at 1-20 (MIKYLYVILLGLLLSGCQPA) is a signal peptide. Residues 21–259 (EVVEIEASPK…HLNEKYFGHV (239 aa)) form a non-LT domain region. The interval 260–494 (KRFDYVDTRA…LKPKLGAGQP (235 aa)) is LT domain. Residue E304 is part of the active site. Residues 473-485 (QSLASDSKTNNTL) are compositionally biased toward polar residues. Residues 473–494 (QSLASDSKTNNTLKPKLGAGQP) form a disordered region.

In the N-terminal section; belongs to the bacterial solute-binding protein 3 family. This sequence in the C-terminal section; belongs to the transglycosylase Slt family.

Its subcellular location is the cell outer membrane. It catalyses the reaction Exolytic cleavage of the (1-&gt;4)-beta-glycosidic linkage between N-acetylmuramic acid (MurNAc) and N-acetylglucosamine (GlcNAc) residues in peptidoglycan, from either the reducing or the non-reducing ends of the peptidoglycan chains, with concomitant formation of a 1,6-anhydrobond in the MurNAc residue.. Its function is as follows. Murein-degrading enzyme that degrades murein glycan strands and insoluble, high-molecular weight murein sacculi, with the concomitant formation of a 1,6-anhydromuramoyl product. Lytic transglycosylases (LTs) play an integral role in the metabolism of the peptidoglycan (PG) sacculus. Their lytic action creates space within the PG sacculus to allow for its expansion as well as for the insertion of various structures such as secretion systems and flagella. This is Membrane-bound lytic murein transglycosylase F from Shewanella denitrificans (strain OS217 / ATCC BAA-1090 / DSM 15013).